We begin with the raw amino-acid sequence, 327 residues long: Complex I intermediate-associated protein 30, mitochondrial (327 aa).

The N-terminal 24 residues, 1 to 24, are a transit peptide targeting the mitochondrion; that stretch reads MALVHKLLRGTYILRKFSKPASAL. The segment at 42–63 is disordered; the sequence is PVASPGKASSQRKTEGDLQGDH. Positions 53–63 are enriched in basic and acidic residues; that stretch reads RKTEGDLQGDH. The residue at position 318 (serine 318) is a Phosphoserine.

Belongs to the CIA30 family. In terms of assembly, part of the mitochondrial complex I assembly/MCIA complex that comprises at least the core subunits TMEM126B, NDUFAF1, ECSIT and ACAD9 and complement subunits such as COA1 and TMEM186. Interacts with ECSIT. Interacts with ACAD9. At early stages of complex I assembly, it is found in intermediate subcomplexes that contain different subunits including NDUFB6, NDUFA6, NDUFA9, NDUFS3, NDUFS7, ND1, ND2 and ND3. Interacts with TMEM70 and TMEM242.

The protein resides in the mitochondrion. Its subcellular location is the mitochondrion matrix. As part of the MCIA complex, involved in the assembly of the mitochondrial complex I. This Pongo pygmaeus (Bornean orangutan) protein is Complex I intermediate-associated protein 30, mitochondrial.